The primary structure comprises 89 residues: MAVSKQQKHDLTVKFGGSASNTGKTEVQVAILSAEIDSLTTHMIENKKDKASKRGLYKKVAQRKKLLSYLQRVDIERYRALIKELNLRG.

This sequence belongs to the universal ribosomal protein uS15 family. Part of the 30S ribosomal subunit. Forms a bridge to the 50S subunit in the 70S ribosome, contacting the 23S rRNA.

In terms of biological role, one of the primary rRNA binding proteins, it binds directly to 16S rRNA where it helps nucleate assembly of the platform of the 30S subunit by binding and bridging several RNA helices of the 16S rRNA. Its function is as follows. Forms an intersubunit bridge (bridge B4) with the 23S rRNA of the 50S subunit in the ribosome. In Ureaplasma parvum serovar 3 (strain ATCC 27815 / 27 / NCTC 11736), this protein is Small ribosomal subunit protein uS15.